Consider the following 426-residue polypeptide: Histidinol dehydrogenase (426 aa).

Residues Tyr123, Gln185, and Asn208 each coordinate NAD(+). Substrate contacts are provided by Ser231, Gln253, and His256. Zn(2+) contacts are provided by Gln253 and His256. Catalysis depends on proton acceptor residues Glu321 and His322. Residues His322, Asp355, Glu409, and His414 each contribute to the substrate site. Asp355 provides a ligand contact to Zn(2+). His414 contributes to the Zn(2+) binding site.

It belongs to the histidinol dehydrogenase family. Zn(2+) serves as cofactor.

The enzyme catalyses L-histidinol + 2 NAD(+) + H2O = L-histidine + 2 NADH + 3 H(+). It functions in the pathway amino-acid biosynthesis; L-histidine biosynthesis; L-histidine from 5-phospho-alpha-D-ribose 1-diphosphate: step 9/9. In terms of biological role, catalyzes the sequential NAD-dependent oxidations of L-histidinol to L-histidinaldehyde and then to L-histidine. This is Histidinol dehydrogenase from Bacillus licheniformis (strain ATCC 14580 / DSM 13 / JCM 2505 / CCUG 7422 / NBRC 12200 / NCIMB 9375 / NCTC 10341 / NRRL NRS-1264 / Gibson 46).